The chain runs to 182 residues: Bis(5'-nucleosyl)-tetraphosphatase [asymmetrical] (182 aa).

The HIT domain occupies 3–110; the sequence is KQLYFSKFPV…IPRKKADFSE (108 aa). Substrate contacts are provided by residues N28, Q84, and 90 to 93; that span reads GQTV. A Histidine triad motif motif is present at residues 95 to 99; sequence HVHVH. H97 functions as the Tele-AMP-histidine intermediate in the catalytic mechanism. H99 contacts substrate. Residues 135-161 are disordered; the sequence is RYAGDERPPTSMRQAIPKDEDRKPRTL. Positions 150–161 are enriched in basic and acidic residues; sequence IPKDEDRKPRTL.

It catalyses the reaction P(1),P(4)-bis(5'-guanosyl) tetraphosphate + H2O = GMP + GTP + 2 H(+). In terms of biological role, asymmetrically hydrolyzes Ap4A to yield AMP and ATP. This is Bis(5'-nucleosyl)-tetraphosphatase [asymmetrical] (aph1) from Schizosaccharomyces pombe (strain 972 / ATCC 24843) (Fission yeast).